The following is a 227-amino-acid chain: 2,3-bisphosphoglycerate-dependent phosphoglycerate mutase (227 aa).

Substrate contacts are provided by residues 7–14 (RHGFSEWN), 20–21 (TG), arginine 59, 86–89 (ERHY), lysine 97, 113–114 (RR), and 182–183 (GN). Catalysis depends on histidine 8, which acts as the Tele-phosphohistidine intermediate. Glutamate 86 (proton donor/acceptor) is an active-site residue.

This sequence belongs to the phosphoglycerate mutase family. BPG-dependent PGAM subfamily. Homodimer.

It catalyses the reaction (2R)-2-phosphoglycerate = (2R)-3-phosphoglycerate. The protein operates within carbohydrate degradation; glycolysis; pyruvate from D-glyceraldehyde 3-phosphate: step 3/5. Catalyzes the interconversion of 2-phosphoglycerate and 3-phosphoglycerate. The polypeptide is 2,3-bisphosphoglycerate-dependent phosphoglycerate mutase (Histophilus somni (strain 129Pt) (Haemophilus somnus)).